The chain runs to 540 residues: Eukaryotic translation initiation factor 3 subunit L (540 aa).

In terms of domain architecture, PCI spans 307–515; the sequence is TFSDILLYIQ…IHIADTKVSH (209 aa).

It belongs to the eIF-3 subunit L family. As to quaternary structure, component of the eukaryotic translation initiation factor 3 (eIF-3) complex. The eIF-3 complex interacts with pix.

The protein localises to the cytoplasm. In terms of biological role, component of the eukaryotic translation initiation factor 3 (eIF-3) complex, which is involved in protein synthesis of a specialized repertoire of mRNAs and, together with other initiation factors, stimulates binding of mRNA and methionyl-tRNAi to the 40S ribosome. The eIF-3 complex specifically targets and initiates translation of a subset of mRNAs involved in cell proliferation. This is Eukaryotic translation initiation factor 3 subunit L from Drosophila grimshawi (Hawaiian fruit fly).